The chain runs to 690 residues: Guanylate cyclase soluble subunit alpha-1 (690 aa).

Position 266 is a phosphoserine (S266). In terms of domain architecture, Guanylate cyclase spans 480-607 (TMLFSDIVGF…NNVTLANKFE (128 aa)).

It belongs to the adenylyl cyclase class-4/guanylyl cyclase family. In terms of assembly, the active enzyme is formed by a heterodimer of an alpha and a beta subunit. Heterodimer with GUCY1B1. It depends on Mg(2+) as a cofactor. Requires Mn(2+) as cofactor.

Its subcellular location is the cytoplasm. The enzyme catalyses GTP = 3',5'-cyclic GMP + diphosphate. With respect to regulation, activated by nitric oxide in the presence of magnesium or manganese ions. In Rattus norvegicus (Rat), this protein is Guanylate cyclase soluble subunit alpha-1 (Gucy1a1).